We begin with the raw amino-acid sequence, 279 residues long: Proteasome subunit beta (279 aa).

Residues 1-53 (MSGTAEFPGRIPAPYLEVGSSSFVELLGSVAPELLPGRRPLPPGDMGDAAPHG) constitute a propeptide, removed in mature form; by autocatalysis. Catalysis depends on Thr54, which acts as the Nucleophile.

Belongs to the peptidase T1B family. As to quaternary structure, the 20S proteasome core is composed of 14 alpha and 14 beta subunits that assemble into four stacked heptameric rings, resulting in a barrel-shaped structure. The two inner rings, each composed of seven catalytic beta subunits, are sandwiched by two outer rings, each composed of seven alpha subunits. The catalytic chamber with the active sites is on the inside of the barrel. Has a gated structure, the ends of the cylinder being occluded by the N-termini of the alpha-subunits. Is capped by the proteasome-associated ATPase, ARC.

The protein resides in the cytoplasm. The catalysed reaction is Cleavage of peptide bonds with very broad specificity.. Its pathway is protein degradation; proteasomal Pup-dependent pathway. Its activity is regulated as follows. The formation of the proteasomal ATPase ARC-20S proteasome complex, likely via the docking of the C-termini of ARC into the intersubunit pockets in the alpha-rings, may trigger opening of the gate for substrate entry. Interconversion between the open-gate and close-gate conformations leads to a dynamic regulation of the 20S proteasome proteolysis activity. In terms of biological role, component of the proteasome core, a large protease complex with broad specificity involved in protein degradation. This chain is Proteasome subunit beta, found in Stackebrandtia nassauensis (strain DSM 44728 / CIP 108903 / NRRL B-16338 / NBRC 102104 / LLR-40K-21).